The primary structure comprises 423 residues: MLRVRCLRGGSRGAEAVHYIGSRLGGSLTGWVQRTFQSTQAATASSQNSCAAEDKATHPLPKDCPVSSYNEWDPLEEVIVGRAENACVPPFTVEVKANTYEKYWPFYQKNGGLYFPKDHLKKAVAEVEEMCNILSMEGVTVKRPDPIDWSLKYKTPDFESTGLYSAMPRDILMVVGNEIIEAPMAWRSRFFEYRAYRSIIKDYFHRGAKWTTAPKPTMADELYDQDYPIHSVEDRHKLAAQGKFVTTEFEPCFDAADFIRAGRDIFAQRSQVTNYLGIEWMRRHLAPDYRVHIISFKDPNPMHIDATFNIIGPGLVLSNPDRPCHQIDLFKKAGWTIVTPPTPVIPDDHPLWMSSKWLSMNVLMLDEKRVMVDANEVPIQKMFEKLGISTIKVNIRNANSLGGGFHCWTCDVRRRGTLQSYFD.

A mitochondrion-targeting transit peptide spans 1–43 (MLRVRCLRGGSRGAEAVHYIGSRLGGSLTGWVQRTFQSTQAAT). Phosphoserine is present on residues S46 and S49. D170 is a binding site for arginine. Residues D254 and H303 contribute to the active site. 4 residues coordinate arginine: D305, R322, S354, and S355. K385 carries the N6-acetyllysine modification. The Amidino-cysteine intermediate role is filled by C407.

This sequence belongs to the amidinotransferase family. As to quaternary structure, homodimer. As to expression, highly expressed in the kidney and pancreas, especially in the proximal tubules of the kidney, and alpha cells of the pancreatic islets (at protein level). Moderately expressed in liver hepatocytes (at protein level). Expressed in the kidney, pancreas, liver, colon, ileum, jejunum, heart and skeletal muscle. In reproductive tissues, expressed in the testis, epididymis, ovary, oviduct and uterus. Expressed throughout the brain in neurons, astrocytes and oligodendrocytes. In 12.5 dpc embryos, it is expressed in the middle part of the somites, hepatic primordium and wall of the dorsal aorta. Expressed in 15.5 dpc embryos in isolated cells throughout the central nervous system, skeletal muscles, gonad primordia, caudal somites, liver and pancreas, but not in the choroid plexus, root ganglia or kidney. Expressed in skeletal muscle, kidney, pancreas, central nervous system, liver and intestine epithelial cells, but not in epidermis, dermis, olfactory epithelium, trachea, lung, stomach or heart in 18.5 dpc embryos.

The protein resides in the mitochondrion inner membrane. It carries out the reaction L-arginine + glycine = guanidinoacetate + L-ornithine. It catalyses the reaction 4-aminobutanoate + L-arginine = 4-guanidinobutanoate + L-ornithine. The catalysed reaction is beta-alanine + L-arginine = 3-guanidinopropanoate + L-ornithine. The enzyme catalyses taurine + L-arginine = taurocyamine + L-ornithine. The protein operates within amine and polyamine biosynthesis; creatine biosynthesis; creatine from L-arginine and glycine: step 1/2. Functionally, transamidinase that catalyzes the transfer of the amidino group of L-arginine onto the amino moiety of acceptor metabolites such as glycine, beta-alanine, gamma-aminobutyric acid (GABA) and taurine yielding the corresponding guanidine derivatives. Catalyzes the rate-limiting step of creatine biosynthesis, namely the transfer of the amidino group from L-arginine to glycine to generate guanidinoacetate, which is then methylated by GAMT to form creatine. Provides creatine as a source for ATP generation in tissues with high energy demands, in particular skeletal muscle, heart and brain. This chain is Glycine amidinotransferase, mitochondrial (Gatm), found in Rattus norvegicus (Rat).